The chain runs to 412 residues: Transforming growth factor beta-3 proprotein (412 aa).

Residues 1 to 23 (MKMHLQRALVVLALLNFATVSLS) form the signal peptide. N-linked (GlcNAc...) asparagine glycosylation is found at Asn-74, Asn-135, and Asn-142. Residues 261–263 (RGD) carry the Cell attachment site motif. Residue Gln-293 is modified to N5-methylglutamine. 4 disulfides stabilise this stretch: Cys-307-Cys-316, Cys-315-Cys-378, Cys-344-Cys-409, and Cys-348-Cys-411.

It belongs to the TGF-beta family. Interacts with ASPN. Latency-associated peptide: Homodimer; disulfide-linked. Latency-associated peptide: Interacts with Transforming growth factor beta-3 (TGF-beta-3) chain; interaction is non-covalent and maintains (TGF-beta-3) in a latent state. Latency-associated peptide: Interacts with LRRC32/GARP; leading to regulate activation of TGF-beta-3 and promote epithelial fusion during palate development. Latency-associated peptide: Interacts (via cell attachment site) with integrins, leading to release of the active TGF-beta-3. Transforming growth factor beta-3: Homodimer; disulfide-linked. Transforming growth factor beta-3: Interacts with TGF-beta receptors (TGFBR1 and TGFBR2), leading to signal transduction. Post-translationally, transforming growth factor beta-3 proprotein: The precursor proprotein is cleaved in the Golgi apparatus to form Transforming growth factor beta-3 (TGF-beta-3) and Latency-associated peptide (LAP) chains, which remain non-covalently linked, rendering TGF-beta-3 inactive. Methylated at Gln-293 by N6AMT1.

It localises to the secreted. Its subcellular location is the extracellular space. It is found in the extracellular matrix. Transforming growth factor beta-3 proprotein: Precursor of the Latency-associated peptide (LAP) and Transforming growth factor beta-3 (TGF-beta-3) chains, which constitute the regulatory and active subunit of TGF-beta-3, respectively. Functionally, required to maintain the Transforming growth factor beta-3 (TGF-beta-3) chain in a latent state during storage in extracellular matrix. Associates non-covalently with TGF-beta-3 and regulates its activation via interaction with 'milieu molecules', such as LTBP1 and LRRC32/GARP, that control activation of TGF-beta-3. Interaction with integrins results in distortion of the Latency-associated peptide chain and subsequent release of the active TGF-beta-3. In terms of biological role, transforming growth factor beta-3: Multifunctional protein that regulates embryogenesis and cell differentiation and is required in various processes such as secondary palate development. Activation into mature form follows different steps: following cleavage of the proprotein in the Golgi apparatus, Latency-associated peptide (LAP) and Transforming growth factor beta-3 (TGF-beta-3) chains remain non-covalently linked rendering TGF-beta-3 inactive during storage in extracellular matrix. At the same time, LAP chain interacts with 'milieu molecules', such as LTBP1 and LRRC32/GARP that control activation of TGF-beta-3 and maintain it in a latent state during storage in extracellular milieus. TGF-beta-3 is released from LAP by integrins: integrin-binding results in distortion of the LAP chain and subsequent release of the active TGF-beta-3. Once activated following release of LAP, TGF-beta-3 acts by binding to TGF-beta receptors (TGFBR1 and TGFBR2), which transduce signal. The protein is Transforming growth factor beta-3 proprotein (TGFB3) of Homo sapiens (Human).